We begin with the raw amino-acid sequence, 142 residues long: Cytochrome c-type biogenesis protein CcmE (142 aa).

Topologically, residues 1–2 (MK) are cytoplasmic. The helical; Signal-anchor for type II membrane protein transmembrane segment at 3–23 (GKYLLGILVILGALGYMVFGG) threads the bilayer. Residues 24–142 (LGRNLVYFLT…EVRKLIEEAQ (119 aa)) lie on the Periplasmic side of the membrane. Heme is bound by residues His118 and Tyr122.

This sequence belongs to the CcmE/CycJ family.

The protein resides in the cell inner membrane. In terms of biological role, heme chaperone required for the biogenesis of c-type cytochromes. Transiently binds heme delivered by CcmC and transfers the heme to apo-cytochromes in a process facilitated by CcmF and CcmH. The protein is Cytochrome c-type biogenesis protein CcmE of Thermus thermophilus (strain ATCC BAA-163 / DSM 7039 / HB27).